Consider the following 179-residue polypeptide: Acireductone dioxygenase (179 aa).

4 residues coordinate Fe(2+): His-85, His-87, Glu-91, and His-132. Ni(2+)-binding residues include His-85, His-87, Glu-91, and His-132.

This sequence belongs to the acireductone dioxygenase (ARD) family. It depends on Fe(2+) as a cofactor. Ni(2+) serves as cofactor.

It is found in the cytoplasm. Its subcellular location is the nucleus. It catalyses the reaction 1,2-dihydroxy-5-(methylsulfanyl)pent-1-en-3-one + O2 = 4-methylsulfanyl-2-oxobutanoate + formate + 2 H(+). It carries out the reaction 1,2-dihydroxy-5-(methylsulfanyl)pent-1-en-3-one + O2 = 3-(methylsulfanyl)propanoate + CO + formate + 2 H(+). Its pathway is amino-acid biosynthesis; L-methionine biosynthesis via salvage pathway; L-methionine from S-methyl-5-thio-alpha-D-ribose 1-phosphate: step 5/6. Functionally, catalyzes 2 different reactions between oxygen and the acireductone 1,2-dihydroxy-3-keto-5-methylthiopentene (DHK-MTPene) depending upon the metal bound in the active site. Fe-containing acireductone dioxygenase (Fe-ARD) produces formate and 2-keto-4-methylthiobutyrate (KMTB), the alpha-ketoacid precursor of methionine in the methionine recycle pathway. Ni-containing acireductone dioxygenase (Ni-ARD) produces methylthiopropionate, carbon monoxide and formate, and does not lie on the methionine recycle pathway. The protein is Acireductone dioxygenase of Saccharomyces cerevisiae (strain ATCC 204508 / S288c) (Baker's yeast).